Here is a 105-residue protein sequence, read N- to C-terminus: Large ribosomal subunit protein bL21 (105 aa).

It belongs to the bacterial ribosomal protein bL21 family. In terms of assembly, part of the 50S ribosomal subunit. Contacts protein L20.

Functionally, this protein binds to 23S rRNA in the presence of protein L20. In Thermotoga maritima (strain ATCC 43589 / DSM 3109 / JCM 10099 / NBRC 100826 / MSB8), this protein is Large ribosomal subunit protein bL21.